Reading from the N-terminus, the 255-residue chain is Small ribosomal subunit protein uS2 (255 aa).

Positions 232 to 255 are disordered; sequence ASGRDIGASEEAPIEPALEDEAGA.

This sequence belongs to the universal ribosomal protein uS2 family.

The polypeptide is Small ribosomal subunit protein uS2 (Agrobacterium fabrum (strain C58 / ATCC 33970) (Agrobacterium tumefaciens (strain C58))).